The following is a 67-amino-acid chain: DNA-directed RNA polymerases I, II, and III subunit RPABC5 (67 aa).

4 residues coordinate Zn(2+): Cys7, Cys10, Cys44, and Cys45.

The protein belongs to the archaeal Rpo10/eukaryotic RPB10 RNA polymerase subunit family. As to quaternary structure, component of the RNA polymerase I (Pol I), RNA polymerase II (Pol II) and RNA polymerase III (Pol III) complexes consisting of at least 13, 12 and 17 subunits, respectively. Pol I complex consists of a ten-subunit catalytic core composed of POLR1A/RPA1, POLR1B/RPA2, POLR1C/RPAC1, POLR1D/RPAC2, POLR1H/RPA12, POLR2E/RPABC1, POLR2F/RPABC2, POLR2H/RPABC3, POLR2K/RPABC4 and POLR2L/RPABC5; a mobile stalk subunit POLR1F/RPA43 protruding from the core and additional subunits homologous to general transcription factors POLR1E/RPA49 and POLR1G/RPA34. Part of Pol I pre-initiation complex (PIC), in which Pol I core assembles with RRN3 and promoter-bound UTBF and SL1/TIF-IB complex. Pol II complex contains a ten-subunit catalytic core composed of POLR2A/RPB1, POLR2B/RPB2, POLR2C/RPB3, POLR2I/RPB9, POLR2J/RPB11, POLR2E/RPABC1, POLR2F/RPABC2, POLR2H/RPABC3, POLR2K/RPABC4 and POLR2L/RPABC5 and a mobile stalk composed of two subunits POLR2D/RPB4 and POLR2G/RPB7. Part of Pol II(G) complex, in which Pol II core associates with an additional subunit POLR2M; unlike conventional Pol II, Pol II(G) functions as a transcriptional repressor. Part of TBP-based Pol II pre-initiation complex (PIC), in which Pol II core assembles with general transcription factors and other specific initiation factors including GTF2E1, GTF2E2, GTF2F1, GTF2F2, TCEA1, ERCC2, ERCC3, GTF2H2, GTF2H3, GTF2H4, GTF2H5, GTF2A1, GTF2A2, GTF2B and TBP; this large multi-subunit PIC complex mediates DNA unwinding and targets Pol II core to the transcription start site where the first phosphodiester bond forms. Pol III complex consists of a ten-subunit catalytic core composed of POLR3A/RPC1, POLR3B/RPC2, POLR1C/RPAC1, POLR1D/RPAC2, POLR3K/RPC10, POLR2E/RPABC1, POLR2F/RPABC2, POLR2H/RPABC3, POLR2K/RPABC4 and POLR2L/RPABC5; a mobile stalk composed of two subunits POLR3H/RPC8 and CRCP/RPC9, protruding from the core and functioning primarily in transcription initiation; and additional subunits homologous to general transcription factors of the RNA polymerase II machinery, POLR3C/RPC3-POLR3F/RPC6-POLR3G/RPC7 heterotrimer required for transcription initiation and POLR3D/RPC4-POLR3E/RPC5 heterodimer involved in both transcription initiation and termination.

Its subcellular location is the nucleus. The protein resides in the nucleolus. Functionally, DNA-dependent RNA polymerase catalyzes the transcription of DNA into RNA using the four ribonucleoside triphosphates as substrates. Common component of RNA polymerases I, II and III which synthesize ribosomal RNA precursors, mRNA precursors and many functional non-coding RNAs, and a small RNAs, such as 5S rRNA and tRNAs, respectively. The polypeptide is DNA-directed RNA polymerases I, II, and III subunit RPABC5 (POLR2L) (Bos taurus (Bovine)).